The sequence spans 768 residues: Ribosomal RNA large subunit methyltransferase K/L (768 aa).

In terms of domain architecture, THUMP spans 60–175 (DLYKICLWSR…DKQAELYLDL (116 aa)).

It belongs to the methyltransferase superfamily. RlmKL family.

The protein resides in the cytoplasm. The catalysed reaction is guanosine(2445) in 23S rRNA + S-adenosyl-L-methionine = N(2)-methylguanosine(2445) in 23S rRNA + S-adenosyl-L-homocysteine + H(+). It catalyses the reaction guanosine(2069) in 23S rRNA + S-adenosyl-L-methionine = N(2)-methylguanosine(2069) in 23S rRNA + S-adenosyl-L-homocysteine + H(+). Specifically methylates the guanine in position 2445 (m2G2445) and the guanine in position 2069 (m7G2069) of 23S rRNA. The chain is Ribosomal RNA large subunit methyltransferase K/L from Psychrobacter arcticus (strain DSM 17307 / VKM B-2377 / 273-4).